A 292-amino-acid chain; its full sequence is Type II methyltransferase M.SmaI (292 aa).

The tract at residues 110 to 130 (WRDKDDKNKGRAMSYRPPTPE) is disordered.

Belongs to the N(4)/N(6)-methyltransferase family. N(4) subfamily.

It catalyses the reaction a 2'-deoxycytidine in DNA + S-adenosyl-L-methionine = an N(4)-methyl-2'-deoxycytidine in DNA + S-adenosyl-L-homocysteine + H(+). Its function is as follows. A beta subtype methylase thatnrecognizes the double-stranded sequence 5'-CCCGGG-3', methylates C-2 on both strands, and protects the DNA from cleavage by the SmaI endonuclease. This is Type II methyltransferase M.SmaI (smaIM) from Serratia marcescens.